Here is a 249-residue protein sequence, read N- to C-terminus: 1-(5-phosphoribosyl)-5-[(5-phosphoribosylamino)methylideneamino] imidazole-4-carboxamide isomerase (249 aa).

D8 functions as the Proton acceptor in the catalytic mechanism. D131 (proton donor) is an active-site residue.

The protein belongs to the HisA/HisF family.

The protein resides in the cytoplasm. It carries out the reaction 1-(5-phospho-beta-D-ribosyl)-5-[(5-phospho-beta-D-ribosylamino)methylideneamino]imidazole-4-carboxamide = 5-[(5-phospho-1-deoxy-D-ribulos-1-ylimino)methylamino]-1-(5-phospho-beta-D-ribosyl)imidazole-4-carboxamide. It functions in the pathway amino-acid biosynthesis; L-histidine biosynthesis; L-histidine from 5-phospho-alpha-D-ribose 1-diphosphate: step 4/9. This chain is 1-(5-phosphoribosyl)-5-[(5-phosphoribosylamino)methylideneamino] imidazole-4-carboxamide isomerase, found in Nitrosomonas europaea (strain ATCC 19718 / CIP 103999 / KCTC 2705 / NBRC 14298).